The following is a 418-amino-acid chain: MTSYQPNLLVPPEVLSVKGLTDYIQTLLEDDSYLVQVWVEGEVSSAARHRSGFFFTLQDQQEAASIHCVIWNSYCDQLVIEPEVGEQILALGRIRVYPQRGQYQLMAWQLFPAGEGLRSLRYQQLRERLTREGLFDPLQKQALPTYPQTVGVVTSHQAAAWGDIKRTLKAQHPGLKVLFSPTKVQGKQAPEAIVLAIERVIKDGRAEVLIVARGGGATEDLACFNDERVVRAIAECPIPVISGIGHQRDETLADLVADVCAHTPTAAAECIPRLTDWQTDYRNCIARLYIILTRQLDVAHEHLLYQKTRLRRLQIDRQFEREQVLRSRLQNHLLHAIKHRLGQAQQHQQLLQQQLTSLDPTQVLKRGYALVQTTDQQIVRSTQQLQVDQELKVELAEGHFTARVTALQSSPQEADDER.

This sequence belongs to the XseA family. As to quaternary structure, heterooligomer composed of large and small subunits.

It localises to the cytoplasm. It catalyses the reaction Exonucleolytic cleavage in either 5'- to 3'- or 3'- to 5'-direction to yield nucleoside 5'-phosphates.. Bidirectionally degrades single-stranded DNA into large acid-insoluble oligonucleotides, which are then degraded further into small acid-soluble oligonucleotides. This is Exodeoxyribonuclease 7 large subunit from Acaryochloris marina (strain MBIC 11017).